The chain runs to 182 residues: NADH-quinone oxidoreductase subunit I (182 aa).

2 consecutive 4Fe-4S ferredoxin-type domains span residues 52 to 82 (LTRD…LQKA) and 92 to 121 (EFFR…LTPD). [4Fe-4S] cluster-binding residues include C62, C65, C68, C72, C101, C104, C107, and C111.

The protein belongs to the complex I 23 kDa subunit family. In terms of assembly, NDH-1 is composed of 13 different subunits. Subunits NuoA, H, J, K, L, M, N constitute the membrane sector of the complex. It depends on [4Fe-4S] cluster as a cofactor.

It is found in the cell inner membrane. It catalyses the reaction a quinone + NADH + 5 H(+)(in) = a quinol + NAD(+) + 4 H(+)(out). In terms of biological role, NDH-1 shuttles electrons from NADH, via FMN and iron-sulfur (Fe-S) centers, to quinones in the respiratory chain. The immediate electron acceptor for the enzyme in this species is believed to be ubiquinone. Couples the redox reaction to proton translocation (for every two electrons transferred, four hydrogen ions are translocated across the cytoplasmic membrane), and thus conserves the redox energy in a proton gradient. The chain is NADH-quinone oxidoreductase subunit I from Pseudomonas putida (strain ATCC 47054 / DSM 6125 / CFBP 8728 / NCIMB 11950 / KT2440).